The sequence spans 549 residues: Probable serine/threonine-protein kinase WNK5 (549 aa).

The Protein kinase domain maps to 25-283; that stretch reads GRFREVLGKG…AKELLADPFL (259 aa). ATP-binding positions include 105–108 and lysine 155; that span reads TELF. The Proton acceptor role is filled by aspartate 172. The interval 414-490 is disordered; it reads ESFGHEDDED…SPAIDDDQNQ (77 aa). Positions 452–463 are enriched in acidic residues; that stretch reads DDSSNDVIPDMD. A compositionally biased stretch (low complexity) spans 467 to 476; the sequence is RSSNRLLNSS. Serine 504 carries the phosphoserine modification. Positions 525–549 are disordered; sequence RGRGFDPNTNELQPQPSSTDFIRRC. The segment covering 531-549 has biased composition (polar residues); sequence PNTNELQPQPSSTDFIRRC.

The protein belongs to the protein kinase superfamily. Ser/Thr protein kinase family. WNK subfamily. As to quaternary structure, interacts with AHK4.

The enzyme catalyses L-seryl-[protein] + ATP = O-phospho-L-seryl-[protein] + ADP + H(+). It catalyses the reaction L-threonyl-[protein] + ATP = O-phospho-L-threonyl-[protein] + ADP + H(+). In terms of biological role, regulates flowering time by modulating the photoperiod pathway. The polypeptide is Probable serine/threonine-protein kinase WNK5 (WNK5) (Arabidopsis thaliana (Mouse-ear cress)).